The following is a 146-amino-acid chain: Cytochrome b5 type B (146 aa).

Positions Met1–Glu11 are excised as a propeptide. At Ser19 the chain carries Phosphoserine. The Cytochrome b5 heme-binding domain occupies Val20–His96. Lys30 is subject to N6-acetyllysine. Ser33 carries the phosphoserine modification. 2 residues coordinate heme: His55 and His79. Residue Ser80 is modified to Phosphoserine. A helical transmembrane segment spans residues Trp119–Tyr136.

This sequence belongs to the cytochrome b5 family. In terms of assembly, component of a complex composed of cytochrome b5, NADH-cytochrome b5 reductase (CYB5R3) and MTARC2.

It is found in the mitochondrion outer membrane. Its function is as follows. Cytochrome b5 is a membrane-bound hemoprotein functioning as an electron carrier for several membrane-bound oxygenases. This chain is Cytochrome b5 type B (Cyb5b), found in Mus musculus (Mouse).